Consider the following 178-residue polypeptide: uncharacterized protein (178 aa).

The next 5 helical transmembrane spans lie at 1–21 (MISI…YGGG), 47–67 (MLAL…AYVG), 75–95 (GFLI…IVLL), 117–137 (VIAV…IKAI), and 158–178 (MHPA…IPYL).

It belongs to the chromate ion transporter (CHR) (TC 2.A.51) family.

The protein resides in the cell membrane. This is an uncharacterized protein from Bacillus subtilis (strain 168).